A 389-amino-acid polypeptide reads, in one-letter code: MREPAFTVGIEEEYLLVDRQSRALAADPPEALMTRLAAAFGDTNHGAVTPEFLRAQIEVGTKVCDSLAEAGEALGALRRVLAEEAKGFGLAPIAASTHPFAEWADLKHTPKERYDLLAEDLQAVVRRLVICGMHVHVGIEDPDLRMDLMAQVSYFLPHLLALTTSSPFWRGEDSGLKSYRIAVFSALPRTGLPDSFSSFAEYQRHVEVLVSAGLIEDSTRIWWDIRPSHRFPTLEMRIADVCTRLDDALCVAALFRCLLRMLYRLRRANQRWRHYARLLIAENRWRAQRYGLDGGLVDFGRGEVVPFADLIEELLELIAPDAAVFGCQAEVLHARTILHRGTSAHNQLRVFAEARAGGMTRDEALVAVVDHLIAQTVAPLGADAGAPGP.

This sequence belongs to the glutamate--cysteine ligase type 2 family. YbdK subfamily.

It catalyses the reaction L-cysteine + L-glutamate + ATP = gamma-L-glutamyl-L-cysteine + ADP + phosphate + H(+). In terms of biological role, ATP-dependent carboxylate-amine ligase which exhibits weak glutamate--cysteine ligase activity. The sequence is that of Putative glutamate--cysteine ligase 2 from Rhodospirillum rubrum (strain ATCC 11170 / ATH 1.1.1 / DSM 467 / LMG 4362 / NCIMB 8255 / S1).